The sequence spans 89 residues: Signal recognition particle 19 kDa protein (89 aa).

The protein belongs to the SRP19 family. As to quaternary structure, part of the signal recognition particle protein translocation system, which is composed of SRP and FtsY. Archaeal SRP consists of a 7S RNA molecule of 300 nucleotides and two protein subunits: SRP54 and SRP19.

Its subcellular location is the cytoplasm. Its function is as follows. Involved in targeting and insertion of nascent membrane proteins into the cytoplasmic membrane. Binds directly to 7S RNA and mediates binding of the 54 kDa subunit of the SRP. The sequence is that of Signal recognition particle 19 kDa protein from Methanobrevibacter smithii (strain ATCC 35061 / DSM 861 / OCM 144 / PS).